Here is a 257-residue protein sequence, read N- to C-terminus: L-aspartate dehydrogenase (257 aa).

The NAD(+) site is built by A124 and N180. H208 is an active-site residue.

This sequence belongs to the L-aspartate dehydrogenase family.

It catalyses the reaction L-aspartate + NADP(+) + H2O = oxaloacetate + NH4(+) + NADPH + H(+). It carries out the reaction L-aspartate + NAD(+) + H2O = oxaloacetate + NH4(+) + NADH + H(+). The protein operates within cofactor biosynthesis; NAD(+) biosynthesis; iminoaspartate from L-aspartate (dehydrogenase route): step 1/1. Specifically catalyzes the NAD or NADP-dependent dehydrogenation of L-aspartate to iminoaspartate. This is L-aspartate dehydrogenase from Methanothermobacter thermautotrophicus (strain ATCC 29096 / DSM 1053 / JCM 10044 / NBRC 100330 / Delta H) (Methanobacterium thermoautotrophicum).